We begin with the raw amino-acid sequence, 344 residues long: NADH-ubiquinone oxidoreductase chain 2 (344 aa).

The next 11 membrane-spanning stretches (helical) occupy residues 1–21 (MNPL…TITL), 24–44 (FHWL…IPLM), 59–79 (YFLT…ISAW), 94–114 (MNIL…HFWI), 121–141 (ISLP…MALL), 150–170 (LNLT…GGIG), 177–197 (IMAF…KFDP), 201–221 (LLNF…LTTI), 245–265 (LILL…KLLI), 273–293 (NATL…FFYI), and 324–344 (TAIM…LLLL).

The protein belongs to the complex I subunit 2 family.

Its subcellular location is the mitochondrion inner membrane. The catalysed reaction is a ubiquinone + NADH + 5 H(+)(in) = a ubiquinol + NAD(+) + 4 H(+)(out). In terms of biological role, core subunit of the mitochondrial membrane respiratory chain NADH dehydrogenase (Complex I) that is believed to belong to the minimal assembly required for catalysis. Complex I functions in the transfer of electrons from NADH to the respiratory chain. The immediate electron acceptor for the enzyme is believed to be ubiquinone. The sequence is that of NADH-ubiquinone oxidoreductase chain 2 (MT-ND2) from Aquarana catesbeiana (American bullfrog).